We begin with the raw amino-acid sequence, 261 residues long: MRIALGIEYDGNGYFGWQRQAEVDSVQAQLERALSIVANEPIGVFCAGRTDAGVHATGQVVHFETHAIRNEGAWTLGVNANLPDNIAVRWVKEVDDSFHARFSATARRYRYVIYNHSFRPGILRHGVSHYHGDIDADRMHQAAQALLGEQDFTSFRAVQCQSKTPFRNVHCVNVTRQGMYVIVDIAANAFLHHMVRNIVGSLLEIGLGNQPLTWMGDLLALKDRNQAAATAKPHGLYLVDVTYPEQYQLPKLALGPLFMLD.

Residue aspartate 51 is the Nucleophile of the active site. Tyrosine 109 serves as a coordination point for substrate.

This sequence belongs to the tRNA pseudouridine synthase TruA family. As to quaternary structure, homodimer.

It catalyses the reaction uridine(38/39/40) in tRNA = pseudouridine(38/39/40) in tRNA. In terms of biological role, formation of pseudouridine at positions 38, 39 and 40 in the anticodon stem and loop of transfer RNAs. This Shewanella baltica (strain OS223) protein is tRNA pseudouridine synthase A.